The sequence spans 303 residues: Dehydrodolichyl diphosphate synthase 1 (303 aa).

The helical transmembrane segment at 14–34 (LLFLFLIPCLFITSYIGFPVF) threads the bilayer.

Belongs to the UPP synthase family. Mg(2+) serves as cofactor. As to expression, expressed in low levels in the whole plant. Preferentially expressed in roots.

Its subcellular location is the endoplasmic reticulum membrane. It carries out the reaction n isopentenyl diphosphate + (2E,6E)-farnesyl diphosphate = a di-trans,poly-cis-polyprenyl diphosphate + n diphosphate. It functions in the pathway protein modification; protein glycosylation. In terms of biological role, catalyzes cis-prenyl chain elongation to produce the polyprenyl backbone of dolichol, a glycosyl carrier-lipid required for the biosynthesis of several classes of glycoprotein. In Arabidopsis thaliana (Mouse-ear cress), this protein is Dehydrodolichyl diphosphate synthase 1 (DPS).